Here is a 223-residue protein sequence, read N- to C-terminus: Sporulation-specific protein 19 (223 aa).

Positions 1–20 are cleaved as a signal peptide; the sequence is MKKQILIVAAQSILCSTVFG. Asn-198 carries the GPI-anchor amidated asparagine lipid modification. The propeptide at 199–223 is removed in mature form; the sequence is ASNFLTPTTVALAVLLTILLFIQAY.

In terms of processing, the GPI-anchor is attached to the protein in the endoplasmic reticulum and serves to target the protein to the cell surface. There, the glucosamine-inositol phospholipid moiety is cleaved off and the GPI-modified mannoprotein is covalently attached via its lipidless GPI glycan remnant to the 1,6-beta-glucan of the outer cell wall layer.

It is found in the secreted. The protein resides in the cell wall. The protein localises to the membrane. Its function is as follows. Involved in sporulation. Essential for completion of the nuclear division. This is Sporulation-specific protein 19 (SPO19) from Saccharomyces cerevisiae (strain ATCC 204508 / S288c) (Baker's yeast).